The sequence spans 329 residues: DNA-directed RNA polymerase subunit alpha (329 aa).

The interval 1–235 is alpha N-terminal domain (alpha-NTD); sequence MQGSVTEFLK…EQLDAFVDLR (235 aa). An alpha C-terminal domain (alpha-CTD) region spans residues 249–329; the sequence is FDPILLRPVD…NWPPASIAED (81 aa).

Belongs to the RNA polymerase alpha chain family. Homodimer. The RNAP catalytic core consists of 2 alpha, 1 beta, 1 beta' and 1 omega subunit. When a sigma factor is associated with the core the holoenzyme is formed, which can initiate transcription.

It catalyses the reaction RNA(n) + a ribonucleoside 5'-triphosphate = RNA(n+1) + diphosphate. Its function is as follows. DNA-dependent RNA polymerase catalyzes the transcription of DNA into RNA using the four ribonucleoside triphosphates as substrates. The protein is DNA-directed RNA polymerase subunit alpha of Aliivibrio salmonicida (strain LFI1238) (Vibrio salmonicida (strain LFI1238)).